A 299-amino-acid polypeptide reads, in one-letter code: Kynurenine formamidase-like hydrolase fscH (299 aa).

The HGGXW motif lies at 48-52 (HGGAW). A disordered region spans residues 90 to 110 (SPRTPSQPVPSGGHVGGEQQA). Residue Ser-142 is the Nucleophile of the active site.

It belongs to the kynurenine formamidase family.

The protein operates within secondary metabolite biosynthesis. In terms of biological role, kynurenine formamidase-like hydrolase; part of the fragmented gene cluster that mediates the biosynthesis of fusarochromene, a tryptophan-derived metabolite closely related to a group of mycotoxins including fusarochromanone. Within the pathway, fscH converts the product of fscD into 4-hydroxykyrunenine. The first step of the pathway is the epimerization of L-tryptophan to D-tryptophan in the presence of the NRPS-like tryptophan epimerase fscC. D-tryptophan is subsequently hydroxylated by the tryptophan 6-hydroxylase fscE to yield 6-hydroxytryptophan. The pyrrole ring undergoes cleavaged by the tryptophan 2,3-dioxygenase fscD and is finally converted to 4-hydroxykyrunenine by the hydrolase fscH. The NRPS-like oxidoreductase fscA reduces the carboxyl group to primary alcohol and the DMATS-type prenyltransferase fscG performs prenylation, followed by the formation of a chromene ring catalyzed by the oxidoreductase fscI, which leads to desacetylfusarochromene. Epoxidation by fscF and rearrangement reactions of chromene double bonds convert compound desacetylfusarochromene to fusarochromanones. Although specific acetyltransferases were not found near the fsc gene cluster, several predicted enzymes containing the N-acetyltransferase superfamily domain are present in the genome of F.equiseti. These predicted enzymes may have the potential to convert desacetylfusarochromene to fusarochromene. This is Kynurenine formamidase-like hydrolase fscH from Fusarium equiseti (Fusarium scirpi).